The chain runs to 576 residues: Nuclear receptor subfamily 1 group D member 2 (576 aa).

Residues 1-60 (MELNAGGVIAYISSSSSASSPASCHSEGSENSFQSSSSSVPSSPNSSNCDANGNPKNADI) form a required for phosphorylation by CSNK1E and cytoplasmic localization region. The segment at 1–99 (MELNAGGVIA…HSGMTKFSGM (99 aa)) is modulating. Low complexity predominate over residues 13-47 (SSSSSASSPASCHSEGSENSFQSSSSSVPSSPNSS). A disordered region spans residues 13 to 90 (SSSSSASSPA…TSAPGMTKSH (78 aa)). Position 46 is a phosphoserine; by GSK3-beta (Ser-46). Residues 100-176 (VLLCKVCGDV…VGMSRDAVRF (77 aa)) constitute a DNA-binding region (nuclear receptor). 2 consecutive NR C4-type zinc fingers follow at residues 103-123 (CKVC…CEGC) and 140-164 (CLKN…FKKC). N6-acetyllysine; by KAT5 occurs at positions 162 and 163. Disordered regions lie at residues 215–246 (QHDQ…SDFA) and 263–282 (LYNQ…QRGE). Composition is skewed to basic and acidic residues over residues 227–237 (LRPKSQLEQEN) and 263–272 (LYNQEHRENS). Intrachain disulfides connect Cys-334–Cys-340 and Cys-371–Cys-381. The NR LBD domain maps to 366-576 (RNSYLCNTGG…EELLAFKVHP (211 aa)). Residues Cys-381 and His-565 each coordinate heme. Residues 394–576 (SGHEIWEEFS…EELLAFKVHP (183 aa)) form an interaction with ZNHIT1 region.

Belongs to the nuclear hormone receptor family. NR1 subfamily. Binds DNA as a monomer or a homodimer. Interacts with NCOA5 coactivator, leading to a strong increase of transcription of target genes. Interacts (via N-terminus) with KAT5. Interacts (via C-terminus) with HDAC1. Interacts with ZNHIT1. Interacts with SIAH2. Deacetylated by HDAC1. Acetylation and deacetylation regulate its transcriptional regulatory activity. Post-translationally, under more reducing intracellular redox conditions, Cys-381 is in its heme-bound state, which is optimal for recruitment of the NCOR1/HDAC3 corepressor complex and repression of target genes. When subjected to oxidative stress conditions, Cys-381 undergoes oxidation to form a disulfide bridge with Cys-371, also triggering a ligand switch that results in release of bound heme and derepression of target genes. In terms of processing, ubiquitinated by SIAH2; leading to its proteasomal degradation. Phosphorylated by CSNK1E; phosphorylation enhances its cytoplasmic localization. In terms of tissue distribution, ubiquitous. Expressed abundantly in skeletal muscle and brown adipose tissue. Expressed during skeletal muscle myogenesis.

The protein resides in the nucleus. Its subcellular location is the cytoplasm. With respect to regulation, the heme-bound form can bind gaseous signaling molecules such as CO and nitric oxide (NO) and NO can reverse its transcriptional repressor activity. Functionally, transcriptional repressor which coordinates circadian rhythm and metabolic pathways in a heme-dependent manner. Integral component of the complex transcription machinery that governs circadian rhythmicity and forms a critical negative limb of the circadian clock by directly repressing the expression of core clock components BMAL1 and CLOCK. Also regulates genes involved in metabolic functions, including lipid metabolism and the inflammatory response. Acts as a receptor for heme which stimulates its interaction with the NCOR1/HDAC3 corepressor complex, enhancing transcriptional repression. Recognizes two classes of DNA response elements within the promoter of its target genes and can bind to DNA as either monomers or homodimers, depending on the nature of the response element. Binds as a monomer to a response element composed of the consensus half-site motif 5'-[A/G]GGTCA-3' preceded by an A/T-rich 5' sequence (RevRE), or as a homodimer to a direct repeat of the core motif spaced by two nuclegotides (RevDR-2). Acts as a potent competitive repressor of ROR alpha (RORA) function and also negatively regulates the expression of NR1D1. Regulates lipid and energy homeostasis in the skeletal muscle via repression of genes involved in lipid metabolism and myogenesis including: CD36, FABP3, FABP4, UCP3, SCD1 and MSTN. Regulates hepatic lipid metabolism via the repression of APOC3. Represses gene expression at a distance in macrophages by inhibiting the transcription of enhancer-derived RNAs (eRNAs). In addition to its activity as a repressor, can also act as a transcriptional activator. Acts as a transcriptional activator of the sterol regulatory element-binding protein 1 (SREBF1) and the inflammatory mediator interleukin-6 (IL6) in the skeletal muscle. Plays a role in the regulation of circadian sleep/wake cycle; essential for maintaining wakefulness during the dark phase or active period. Key regulator of skeletal muscle mitochondrial function; negatively regulates the skeletal muscle expression of core clock genes and genes involved in mitochondrial biogenesis, fatty acid beta-oxidation and lipid metabolism. May play a role in the circadian control of neutrophilic inflammation in the lung. The polypeptide is Nuclear receptor subfamily 1 group D member 2 (Mus musculus (Mouse)).